An 88-amino-acid chain; its full sequence is Sec-independent protein translocase protein TatA (88 aa).

Residues Met1 to Gly21 form a helical membrane-spanning segment. Over residues Met43 to Ala52 the composition is skewed to basic and acidic residues. The segment at Met43–Ala88 is disordered. Polar residues predominate over residues Ile57–Arg71.

The protein belongs to the TatA/E family. In terms of assembly, the Tat system comprises two distinct complexes: a TatABC complex, containing multiple copies of TatA, TatB and TatC subunits, and a separate TatA complex, containing only TatA subunits. Substrates initially bind to the TatABC complex, which probably triggers association of the separate TatA complex to form the active translocon.

It is found in the cell membrane. In terms of biological role, part of the twin-arginine translocation (Tat) system that transports large folded proteins containing a characteristic twin-arginine motif in their signal peptide across membranes. TatA could form the protein-conducting channel of the Tat system. This chain is Sec-independent protein translocase protein TatA, found in Mycobacterium marinum (strain ATCC BAA-535 / M).